We begin with the raw amino-acid sequence, 120 residues long: Immunoglobulin kappa variable 2D-29 (120 aa).

Residues 1–20 form the signal peptide; the sequence is MRLPAQLLGLLMLWIPGSSA. A framework-1 region spans residues 21–43; sequence DIVMTQTPLSLSVTPGQPASISC. The Ig-like domain maps to 21 to 120; sequence DIVMTQTPLS…YYCMQSIQLP (100 aa). A disulfide bridge links C43 with C113. A complementarity-determining-1 region spans residues 44-59; that stretch reads KSSQSLLHSDGKTYLY. The tract at residues 60–74 is framework-2; it reads WYLQKPGQPPQLLIY. Residues 75 to 81 are complementarity-determining-2; that stretch reads EVSNRFS. The interval 82 to 113 is framework-3; that stretch reads GVPDRFSGSGSGTDFTLKISRVEAEDVGVYYC. Residues 114-120 are complementarity-determining-3; the sequence is MQSIQLP.

In terms of assembly, immunoglobulins are composed of two identical heavy chains and two identical light chains; disulfide-linked.

It is found in the secreted. The protein resides in the cell membrane. V region of the variable domain of immunoglobulin light chains that participates in the antigen recognition. Immunoglobulins, also known as antibodies, are membrane-bound or secreted glycoproteins produced by B lymphocytes. In the recognition phase of humoral immunity, the membrane-bound immunoglobulins serve as receptors which, upon binding of a specific antigen, trigger the clonal expansion and differentiation of B lymphocytes into immunoglobulins-secreting plasma cells. Secreted immunoglobulins mediate the effector phase of humoral immunity, which results in the elimination of bound antigens. The antigen binding site is formed by the variable domain of one heavy chain, together with that of its associated light chain. Thus, each immunoglobulin has two antigen binding sites with remarkable affinity for a particular antigen. The variable domains are assembled by a process called V-(D)-J rearrangement and can then be subjected to somatic hypermutations which, after exposure to antigen and selection, allow affinity maturation for a particular antigen. This chain is Immunoglobulin kappa variable 2D-29, found in Homo sapiens (Human).